Reading from the N-terminus, the 574-residue chain is Transmembrane glycoprotein NMB (574 aa).

Positions Met-1–Ala-22 are cleaved as a signal peptide. At Lys-23–Asn-502 the chain is on the extracellular side. N-linked (GlcNAc...) asparagine glycosylation is found at Asn-93, Asn-134, Asn-200, Asn-249, Asn-275, Asn-296, Asn-300, Asn-306, and Asn-312. The 89-residue stretch at Leu-250–Pro-338 folds into the PKD domain. A disordered region spans residues Pro-320–Pro-353. Positions Gly-321–Leu-345 are enriched in pro residues. 2 N-linked (GlcNAc...) asparagine glycosylation sites follow: Asn-463 and Asn-471. The helical transmembrane segment at Gly-503–Tyr-523 threads the bilayer. The Cytoplasmic segment spans residues Lys-524 to Leu-574. Ser-546 is subject to Phosphoserine. The short motif at Arg-558–Asp-560 is the Cell attachment site element.

The protein belongs to the PMEL/NMB family. As to expression, may be up-regulated in bone metastatic breast cancer cells.

It is found in the cell membrane. It localises to the melanosome membrane. Its subcellular location is the early endosome membrane. Could be a melanogenic enzyme. This is Transmembrane glycoprotein NMB (Gpnmb) from Mus musculus (Mouse).